Consider the following 105-residue polypeptide: Thiosulfate sulfurtransferase GlpE (105 aa).

The 89-residue stretch at 15-103 (MQQGAILVDI…WCRAELPIDT (89 aa)) folds into the Rhodanese domain. C63 (cysteine persulfide intermediate) is an active-site residue.

This sequence belongs to the GlpE family.

Its subcellular location is the cytoplasm. The catalysed reaction is thiosulfate + hydrogen cyanide = thiocyanate + sulfite + 2 H(+). It catalyses the reaction thiosulfate + [thioredoxin]-dithiol = [thioredoxin]-disulfide + hydrogen sulfide + sulfite + 2 H(+). Functionally, transferase that catalyzes the transfer of sulfur from thiosulfate to thiophilic acceptors such as cyanide or dithiols. May function in a CysM-independent thiosulfate assimilation pathway by catalyzing the conversion of thiosulfate to sulfite, which can then be used for L-cysteine biosynthesis. The protein is Thiosulfate sulfurtransferase GlpE of Haemophilus influenzae (strain 86-028NP).